A 158-amino-acid polypeptide reads, in one-letter code: Endoribonuclease YbeY (158 aa).

Positions 118, 122, and 128 each coordinate Zn(2+).

It belongs to the endoribonuclease YbeY family. Requires Zn(2+) as cofactor.

It localises to the cytoplasm. Functionally, single strand-specific metallo-endoribonuclease involved in late-stage 70S ribosome quality control and in maturation of the 3' terminus of the 16S rRNA. The polypeptide is Endoribonuclease YbeY (Bartonella quintana (strain Toulouse) (Rochalimaea quintana)).